A 546-amino-acid chain; its full sequence is CTP synthase (546 aa).

An amidoligase domain region spans residues 1-264; sequence MRYIVVTGGV…TKYIMKAMRL (264 aa). Ser12 is a CTP binding site. Ser12 serves as a coordination point for UTP. ATP-binding positions include 13 to 18 and Asp70; that span reads GLGKGI. Mg(2+)-binding residues include Asp70 and Glu140. Residues 147 to 149, 185 to 190, and Lys221 each bind CTP; these read DIE and KTKPTQ. UTP contacts are provided by residues 185–190 and Lys221; that span reads KTKPTQ. The Glutamine amidotransferase type-1 domain maps to 298–534; sequence GSQCTDPMKD…VEAMKAQRLR (237 aa). Gly357 lines the L-glutamine pocket. The active-site Nucleophile; for glutamine hydrolysis is the Cys384. L-glutamine is bound by residues 385–388, Glu408, and Arg464; that span reads FGMQ. Active-site residues include His507 and Glu509.

The protein belongs to the CTP synthase family. In terms of assembly, homotetramer.

It carries out the reaction UTP + L-glutamine + ATP + H2O = CTP + L-glutamate + ADP + phosphate + 2 H(+). The enzyme catalyses L-glutamine + H2O = L-glutamate + NH4(+). It catalyses the reaction UTP + NH4(+) + ATP = CTP + ADP + phosphate + 2 H(+). The protein operates within pyrimidine metabolism; CTP biosynthesis via de novo pathway; CTP from UDP: step 2/2. Its activity is regulated as follows. Allosterically activated by GTP, when glutamine is the substrate; GTP has no effect on the reaction when ammonia is the substrate. The allosteric effector GTP functions by stabilizing the protein conformation that binds the tetrahedral intermediate(s) formed during glutamine hydrolysis. Inhibited by the product CTP, via allosteric rather than competitive inhibition. Functionally, catalyzes the ATP-dependent amination of UTP to CTP with either L-glutamine or ammonia as the source of nitrogen. Regulates intracellular CTP levels through interactions with the four ribonucleotide triphosphates. The protein is CTP synthase of Methanothrix thermoacetophila (strain DSM 6194 / JCM 14653 / NBRC 101360 / PT) (Methanosaeta thermophila).